Consider the following 257-residue polypeptide: Ribonuclease HII (257 aa).

One can recognise an RNase H type-2 domain in the interval 72–257; the sequence is TYIAGIDEVG…FAPIKDMIKK (186 aa). Positions 78, 79, and 170 each coordinate a divalent metal cation.

This sequence belongs to the RNase HII family. The cofactor is Mn(2+). It depends on Mg(2+) as a cofactor.

Its subcellular location is the cytoplasm. It catalyses the reaction Endonucleolytic cleavage to 5'-phosphomonoester.. Functionally, endonuclease that specifically degrades the RNA of RNA-DNA hybrids. In Bacillus anthracis (strain A0248), this protein is Ribonuclease HII.